Consider the following 213-residue polypeptide: Na(+)-translocating NADH-quinone reductase subunit D (213 aa).

Helical transmembrane passes span 21 to 41 (PLIA…VNTA), 42 to 62 (ITMG…VSLL), 69 to 86 (SVRM…VIVI), 101 to 121 (LSVF…AESL), 131 to 151 (FLDG…VSIV), and 183 to 203 (FGLM…IWGV).

This sequence belongs to the NqrDE/RnfAE family. Composed of six subunits; NqrA, NqrB, NqrC, NqrD, NqrE and NqrF.

It is found in the cell inner membrane. It catalyses the reaction a ubiquinone + n Na(+)(in) + NADH + H(+) = a ubiquinol + n Na(+)(out) + NAD(+). Functionally, NQR complex catalyzes the reduction of ubiquinone-1 to ubiquinol by two successive reactions, coupled with the transport of Na(+) ions from the cytoplasm to the periplasm. NqrA to NqrE are probably involved in the second step, the conversion of ubisemiquinone to ubiquinol. The polypeptide is Na(+)-translocating NADH-quinone reductase subunit D (Chlamydia caviae (strain ATCC VR-813 / DSM 19441 / 03DC25 / GPIC) (Chlamydophila caviae)).